The following is a 1180-amino-acid chain: Pyruvate carboxylase 2 (1180 aa).

Ser2 is subject to N-acetylserine. In terms of domain architecture, Biotin carboxylation spans 19 to 471 (EKNKILVANR…WTTFIDDTPQ (453 aa)). ATP contacts are provided by Lys137, Glu221, and His256. The 198-residue stretch at 141–338 (RHLAARANVP…IVSAQIQIAA (198 aa)) folds into the ATP-grasp domain. Residue Arg313 is part of the active site. Positions 558-825 (TLLMDTTWRD…DTGINVEHVR (268 aa)) constitute a Pyruvate carboxyltransferase domain. Substrate-binding positions include 566-570 (RDAHQ) and Arg639. Asp567 serves as a coordination point for a divalent metal cation. A divalent metal cation contacts are provided by Lys735, His765, and His767. An N6-carboxylysine modification is found at Lys735. Thr899 is a binding site for substrate. The Biotinyl-binding domain occupies 1095–1170 (KADVHDTHQI…DASDLLVVLE (76 aa)). Lys1136 is modified (N6-biotinyllysine).

As to quaternary structure, homotetramer. The cofactor is biotin. Zn(2+) serves as cofactor.

It is found in the cytoplasm. It carries out the reaction hydrogencarbonate + pyruvate + ATP = oxaloacetate + ADP + phosphate + H(+). It participates in carbohydrate biosynthesis; gluconeogenesis. Its function is as follows. Pyruvate carboxylase catalyzes a 2-step reaction, involving the ATP-dependent carboxylation of the covalently attached biotin in the first step and the transfer of the carboxyl group to pyruvate in the second. The protein is Pyruvate carboxylase 2 (PYC2) of Saccharomyces cerevisiae (strain ATCC 204508 / S288c) (Baker's yeast).